A 531-amino-acid chain; its full sequence is Acetate CoA-transferase YdiF (531 aa).

The active-site 5-glutamyl coenzyme A thioester intermediate is glutamate 333.

This sequence belongs to the 3-oxoacid CoA-transferase family. As to quaternary structure, homotetramer; dimer of dimers.

It carries out the reaction an acyl-CoA + acetate = a carboxylate + acetyl-CoA. Functionally, coA transferase having broad substrate specificity for short-chain acyl-CoA thioesters with the activity decreasing when the length of the carboxylic acid chain exceeds four carbons. Exhibits high activity with acetoacetyl-CoA, propionyl-CoA, crotonoyl-CoA or butyryl-CoA as donors, with acetate as an acceptor. When acetyl-CoA is used as the donor, propionate, acetoacetate, butyrate, isobutyrate, and 4-hydroxybutyrate can be utilized as acceptors but not isovalerate. May play a role in short-chain fatty acid metabolism in E.coli. This Escherichia coli O157:H7 protein is Acetate CoA-transferase YdiF.